The chain runs to 612 residues: MPVRQLPEQIVNRIAAGEVVERPASAVKELVENAIDAGGTRIDIFTEGGGRRRIVITDDGSGMTQGDLALAVERHATSKLDDEDLLRIRTLGFRGEALPSISSVAKLAITTRHAAEPHAWAVEVDAGAKSAIAPAALQRGTRVEVSDLFYATPARLKFLKTDRTEAEAIREVVRRLAMARPDIAFTLAGEERAPVTWAAALPGAPGRLTRLGDILGSDFRTHAIEVGSEREGVSVEGFAAAPSLTRANALGQYLFVNGRPVRDKLILGAVRAAYADYLPRDRHPIVALFVTLDPQEVDANVHPAKTEVRFRNAGLVRALIVHALKDGLAREGRRTAANTNGAAITTAFRTEGFSREGFARESLPRGGYDWRSSPAAPWPPQAAAQAPAMGFDESAQAAFDAGAPSADTRGNEAPLGDALGRPLGAARTQIHENYIVAQTNDGLILVDQHAAHERIVYERLKASLTKNGVARQMLLIPEIVEMDEASVEKLLARASELEKYGLSIESFGPGAVAVRETPALLGKANAASLLRDLAEHMAEWDEALPLERRLMHVAATMACHGSVRSGRILKVEEMNALLREMEATPNSGQCNHGRPTYVELKLADIEKLFGRR.

It belongs to the DNA mismatch repair MutL/HexB family.

Functionally, this protein is involved in the repair of mismatches in DNA. It is required for dam-dependent methyl-directed DNA mismatch repair. May act as a 'molecular matchmaker', a protein that promotes the formation of a stable complex between two or more DNA-binding proteins in an ATP-dependent manner without itself being part of a final effector complex. In Afipia carboxidovorans (strain ATCC 49405 / DSM 1227 / KCTC 32145 / OM5) (Oligotropha carboxidovorans), this protein is DNA mismatch repair protein MutL.